The chain runs to 93 residues: Cobalt transport protein CbiN (93 aa).

The next 2 helical transmembrane spans lie at 5-25 and 63-83; these read LMLLAMVVALVILPFFINHGG and LLFTLQGSLGAAVIFYILGYC.

Belongs to the CbiN family. As to quaternary structure, forms an energy-coupling factor (ECF) transporter complex composed of an ATP-binding protein (A component, CbiO), a transmembrane protein (T component, CbiQ) and 2 possible substrate-capture proteins (S components, CbiM and CbiN) of unknown stoichimetry.

Its subcellular location is the cell inner membrane. It participates in cofactor biosynthesis; adenosylcobalamin biosynthesis. Its function is as follows. Part of the energy-coupling factor (ECF) transporter complex CbiMNOQ involved in cobalt import. The chain is Cobalt transport protein CbiN from Salmonella agona (strain SL483).